The sequence spans 343 residues: N-acetyl-gamma-glutamyl-phosphate reductase (343 aa).

The active site involves Cys149.

This sequence belongs to the NAGSA dehydrogenase family. Type 1 subfamily.

The protein localises to the cytoplasm. It carries out the reaction N-acetyl-L-glutamate 5-semialdehyde + phosphate + NADP(+) = N-acetyl-L-glutamyl 5-phosphate + NADPH + H(+). It functions in the pathway amino-acid biosynthesis; L-arginine biosynthesis; N(2)-acetyl-L-ornithine from L-glutamate: step 3/4. Its function is as follows. Catalyzes the NADPH-dependent reduction of N-acetyl-5-glutamyl phosphate to yield N-acetyl-L-glutamate 5-semialdehyde. The polypeptide is N-acetyl-gamma-glutamyl-phosphate reductase (Methanococcus maripaludis (strain C5 / ATCC BAA-1333)).